Consider the following 567-residue polypeptide: ETHYLENE INSENSITIVE 3-like 3 protein (567 aa).

The stretch at 24 to 44 (NVAEIDVSDEEIDADDLERRM) forms a coiled coil. 2 disordered regions span residues 55–81 (KERQKAGSQGAQTKETPKKISDQAQRK) and 286–393 (IQQP…RNIL). The segment covering 69–79 (ETPKKISDQAQ) has biased composition (basic and acidic residues). A DNA-binding region spans residues 162 to 288 (SQFVLQDLQD…LNQEESLIQQ (127 aa)). A compositionally biased stretch (polar residues) spans 286-299 (IQQPSSDNGNSNVT). Basic and acidic residues predominate over residues 300–312 (ETHRRGNNADRRK). Residues 363–372 (KHRRRKRPRI) show a composition bias toward basic residues.

It belongs to the EIN3 family. Interacts with MYB72.

It localises to the nucleus. In terms of biological role, probable transcription factor that may be involved in the ethylene response pathway. This Arabidopsis thaliana (Mouse-ear cress) protein is ETHYLENE INSENSITIVE 3-like 3 protein (EIL3).